We begin with the raw amino-acid sequence, 484 residues long: Probable endopeptidase p60 (484 aa).

An N-terminal signal peptide occupies residues 1–27; that stretch reads MNMKKATIAATAGIAVTAFAAPTIASA. In terms of domain architecture, LysM 1 spans 28 to 71; the sequence is STVVVEAGDTLWGIAQSKGTTVDAIKKANNLTTDKIVPGQKLQV. Residues 80 to 144 form the SH3b domain; it reads KTEKSVSATW…VNGKYLTDKA (65 aa). A disordered region spans residues 150–192; that stretch reads APTQEVKKETTTQQAAPAAETKTEVKQTTQATTPAPKVAETKE. Over residues 160 to 169 the composition is skewed to low complexity; the sequence is TTQQAAPAAE. In terms of domain architecture, LysM 2 spans 201–244; it reads TTHAVKSGDTIWALSVKYGVSVQDIMSWNNLSSSSIYVGQKLAI. Residues 254 to 367 form a disordered region; the sequence is KAEVKTEAPA…QGSSNNNSNS (114 aa). 2 stretches are compositionally biased toward low complexity: residues 273–282 and 289–367; these read KENTNTNTAT and ATQQ…NSNS. The segment at 311–355 is 19 X 2 AA tandem repeats of T-N; sequence TNTNANKTNTNTNTNTNTNNTNTNTPSKNTNTNSNTNTNTNSNTN. One can recognise a NlpC/P60 domain in the interval 366–484; sequence NSSASAIIAE…GKYLVGFGRV (119 aa). Cysteine 396 functions as the Nucleophile in the catalytic mechanism. The Proton acceptor role is filled by histidine 446. Asparagine 458 is a catalytic residue.

It belongs to the peptidase C40 family.

It localises to the cell surface. The protein resides in the secreted. This major extracellular protein may be involved in the invasion of non-professional phagocytic cells by Listeria. This Listeria monocytogenes serovar 1/2a (strain ATCC BAA-679 / EGD-e) protein is Probable endopeptidase p60 (iap).